The chain runs to 150 residues: Large ribosomal subunit protein bL9 (150 aa).

Belongs to the bacterial ribosomal protein bL9 family.

Its function is as follows. Binds to the 23S rRNA. The chain is Large ribosomal subunit protein bL9 from Buchnera aphidicola subsp. Acyrthosiphon pisum (strain 5A).